We begin with the raw amino-acid sequence, 358 residues long: Methylthioribose-1-phosphate isomerase (358 aa).

Residues 54 to 56, Arg-96, and Gln-205 contribute to the substrate site; that span reads RGA. Catalysis depends on Asp-246, which acts as the Proton donor. Residue 256–257 coordinates substrate; it reads NK.

This sequence belongs to the eIF-2B alpha/beta/delta subunits family. MtnA subfamily.

The enzyme catalyses 5-(methylsulfanyl)-alpha-D-ribose 1-phosphate = 5-(methylsulfanyl)-D-ribulose 1-phosphate. The protein operates within amino-acid biosynthesis; L-methionine biosynthesis via salvage pathway; L-methionine from S-methyl-5-thio-alpha-D-ribose 1-phosphate: step 1/6. Catalyzes the interconversion of methylthioribose-1-phosphate (MTR-1-P) into methylthioribulose-1-phosphate (MTRu-1-P). In Pseudomonas fluorescens (strain Pf0-1), this protein is Methylthioribose-1-phosphate isomerase.